Here is a 465-residue protein sequence, read N- to C-terminus: Ribulose bisphosphate carboxylase large chain (465 aa).

An N6,N6,N6-trimethyllysine modification is found at Lys-4. Residues Asn-113 and Thr-163 each contribute to the substrate site. Lys-165 (proton acceptor) is an active-site residue. Lys-167 is a substrate binding site. Mg(2+) contacts are provided by Lys-191, Asp-193, and Glu-194. Lys-191 carries the N6-carboxylysine modification. The Proton acceptor role is filled by His-284. Substrate contacts are provided by Arg-285, His-317, and Ser-369.

It belongs to the RuBisCO large chain family. Type I subfamily. As to quaternary structure, heterohexadecamer of 8 large chains and 8 small chains; disulfide-linked. The disulfide link is formed within the large subunit homodimers. The cofactor is Mg(2+). Post-translationally, the disulfide bond which can form in the large chain dimeric partners within the hexadecamer appears to be associated with oxidative stress and protein turnover.

It is found in the plastid. Its subcellular location is the chloroplast. It catalyses the reaction 2 (2R)-3-phosphoglycerate + 2 H(+) = D-ribulose 1,5-bisphosphate + CO2 + H2O. The enzyme catalyses D-ribulose 1,5-bisphosphate + O2 = 2-phosphoglycolate + (2R)-3-phosphoglycerate + 2 H(+). Functionally, ruBisCO catalyzes two reactions: the carboxylation of D-ribulose 1,5-bisphosphate, the primary event in carbon dioxide fixation, as well as the oxidative fragmentation of the pentose substrate in the photorespiration process. Both reactions occur simultaneously and in competition at the same active site. The protein is Ribulose bisphosphate carboxylase large chain of Ephedra tweediana (Vining horsetail).